The chain runs to 318 residues: C1GALT1-specific chaperone 1 (318 aa).

The Cytoplasmic segment spans residues 1-6; it reads MLSESS. A helical; Signal-anchor for type II membrane protein membrane pass occupies residues 7–26; sequence SFLKGVMLGSIFCALITMLG. The Lumenal portion of the chain corresponds to 27–318; sequence HIRIGHGNRM…FLPPNGSDND (292 aa).

This sequence belongs to the glycosyltransferase 31 family. Beta3-Gal-T subfamily. As to quaternary structure, associates with core 1 beta-3-galactosyltransferase (C1GALT1), probably not with the soluble active form. In terms of tissue distribution, ubiquitously expressed. Abundantly expressed in salivary gland, stomach, small intestine, kidney, and testis and at intermediate levels in whole brain, cerebellum, spinal cord, thymus, spleen, trachea, lung, pancreas, ovary, and uterus.

Its subcellular location is the membrane. Functionally, probable chaperone required for the generation of 1 O-glycan Gal-beta1-3GalNAc-alpha1-Ser/Thr (T antigen), which is a precursor for many extended O-glycans in glycoproteins. Probably acts as a specific molecular chaperone assisting the folding/stability of core 1 beta-3-galactosyltransferase (C1GALT1). The sequence is that of C1GALT1-specific chaperone 1 (C1GALT1C1) from Homo sapiens (Human).